The sequence spans 207 residues: Adenine phosphoribosyltransferase (207 aa).

Positions 1-33 are disordered; the sequence is MRPAKPPQSKERKRSKSLTSADHDNSPQRAETA.

The protein belongs to the purine/pyrimidine phosphoribosyltransferase family. As to quaternary structure, homodimer.

The protein resides in the cytoplasm. The catalysed reaction is AMP + diphosphate = 5-phospho-alpha-D-ribose 1-diphosphate + adenine. The protein operates within purine metabolism; AMP biosynthesis via salvage pathway; AMP from adenine: step 1/1. Its function is as follows. Catalyzes a salvage reaction resulting in the formation of AMP, that is energically less costly than de novo synthesis. This is Adenine phosphoribosyltransferase from Corynebacterium jeikeium (strain K411).